The chain runs to 505 residues: Metal transporter Nramp3.2 (505 aa).

12 helical membrane passes run 50–70 (LWLF…PGNL), 78–98 (AIAG…GLLV), 127–147 (MVLW…EVIG), 159–179 (FVPL…FLFL), 187–207 (LEAV…WMFA), 233–253 (AVGV…SALV), 280–300 (ALVI…KGFY), 321–341 (YGGG…AAGQ), 369–389 (ALIT…VFDT), 400–420 (WLNV…LCLV), 439–459 (AWLV…DFFF), and 466–486 (AFTT…IYLI).

Belongs to the NRAMP (TC 2.A.55) family. As to expression, expressed in roots, stems, buds and leaves.

Its subcellular location is the vacuole membrane. The enzyme catalyses Mn(2+)(in) = Mn(2+)(out). The catalysed reaction is Fe(2+)(in) = Fe(2+)(out). Divalent metal transporter. Can transport manganese (Mn) and iron (Fe). Involved in the release of metals stored in the vacuole. This Populus trichocarpa (Western balsam poplar) protein is Metal transporter Nramp3.2.